We begin with the raw amino-acid sequence, 518 residues long: F-box protein At1g47056 (518 aa).

Residues P37 to S82 enclose the F-box domain.

This chain is F-box protein At1g47056, found in Arabidopsis thaliana (Mouse-ear cress).